A 402-amino-acid chain; its full sequence is MSKGRLFTSESVTEGHPDKICDAISDSVLDSLLAQDPRSRVAVETLVTTGQVHVVGEVTTSAKEAFADITNTVRHRILEVGYDSSDKGFDGTTCGVNIGIGAQSPDIAQGVDTAHETRVEGAGDPLDLQGAGDQGLMFGYAIKDTPELMPLPIALAHRLARRLTEVRKNGVLDYLRPDGKTQVTVQYDGVTPVRLDTVVLSTQHAEGIDLEGTLTPDIREKVVNTVLSDLNHDSMDTSDFRLLVNPTGKFVLGGPMGDAGLTGRKIIVDTYGGWARHGGGAFSGKDPSKVDRSAAYAMRWVAKNVVAAGLADRVEVQVAYAIGKAAPVGLFVETFGTETVDPAKIEKAITEVFDLRPGAIVRDLDLLRPIYAPTAAYGHFGRTDIDLPWERTDKADALKTAV.

An ATP-binding site is contributed by H16. D18 is a binding site for Mg(2+). E44 contacts K(+). Residues E57 and Q103 each contribute to the L-methionine site. The flexible loop stretch occupies residues 103-113 (QSPDIAQGVDT). ATP is bound by residues 178-180 (DGK), 249-250 (KF), D258, 264-265 (RK), A281, and K285. An L-methionine-binding site is contributed by D258. K289 lines the L-methionine pocket.

This sequence belongs to the AdoMet synthase family. In terms of assembly, homotetramer; dimer of dimers. Mg(2+) is required as a cofactor. It depends on K(+) as a cofactor.

Its subcellular location is the cytoplasm. It carries out the reaction L-methionine + ATP + H2O = S-adenosyl-L-methionine + phosphate + diphosphate. It functions in the pathway amino-acid biosynthesis; S-adenosyl-L-methionine biosynthesis; S-adenosyl-L-methionine from L-methionine: step 1/1. In terms of biological role, catalyzes the formation of S-adenosylmethionine (AdoMet) from methionine and ATP. The overall synthetic reaction is composed of two sequential steps, AdoMet formation and the subsequent tripolyphosphate hydrolysis which occurs prior to release of AdoMet from the enzyme. The polypeptide is S-adenosylmethionine synthase (Mycobacterium sp. (strain JLS)).